The following is a 683-amino-acid chain: Outer dynein arm-docking complex subunit 4 (683 aa).

TPR repeat units lie at residues 13-46, 47-80, 48-80, and 81-114; these read FPSY…QSGD, KNCL…DPTF, NCLV…DPTF, and CKGI…RPDR. Residues 158–179 form a disordered region; it reads QQKPHPVRQLIHHPKRESKRKG. Residues 167–179 show a composition bias toward basic residues; it reads LIHHPKRESKRKG. TPR repeat units follow at residues 275 to 311, 320 to 353, 360 to 393, 397 to 430, and 437 to 470; these read LKSL…NKEE, GNLY…AKEY, SRAL…AKTT, TWLF…AEEE, and LNAS…AKLV. 2 disordered regions span residues 510-537 and 553-683; these read ENAT…PEKV and VLSK…EPIE. Composition is skewed to basic and acidic residues over residues 521–537, 566–590, 602–620, and 629–675; these read TAKE…PEKV, PEQR…ERGP, GRTE…RPSE, and SSPR…IEKD. The TPR 15 repeat unit spans residues 592 to 625; that stretch reads DTAKGQFGEAGRTEQNREETREIYRRPSELDQNL.

Component of the outer dynein arm-docking complex along with ODAD1, ODAD2 and ODAD3. Interacts with ODAD1; this interaction may facilitate the recruitment and/or attachment of outer dynein arm docking complex proteins, including ODAD1, ODAD3 and ODAD2, to ciliary axonemes. Interacts with components of the IFT complex A, including IFT140, TTC21B/IFT139 and WDR19/IFT144, and the IFT complex B, including IFT46, IFT52 and IFT57. Interacts with CFAP53. Expressed in trachea multiciliated cells.

It localises to the cytoplasm. Its subcellular location is the cytoskeleton. The protein resides in the cilium axoneme. Functionally, component of the outer dynein arm-docking complex (ODA-DC) that mediates outer dynein arms (ODA) binding onto the doublet microtubule. Plays an essential role for the assembly of ODA-DC and for the docking of ODA in ciliary axoneme. The chain is Outer dynein arm-docking complex subunit 4 from Bos taurus (Bovine).